Consider the following 432-residue polypeptide: Serine/threonine-protein kinase stk11 (432 aa).

The region spanning 52–312 (YLMGDLLGEG…IQQIRQHNWF (261 aa)) is the Protein kinase domain. ATP is bound by residues 58–66 (LGEGSYGKV) and Lys-81. The Proton acceptor role is filled by Asp-179. Phosphothreonine; by autocatalysis is present on Thr-192. The interval 398-432 (TESQLKTERRVSSSSQRKASTTGSKVRKLSACKQQ) is disordered. Residues 409–421 (SSSSQRKASTTGS) show a composition bias toward polar residues. Positions 422–432 (KVRKLSACKQQ) are enriched in basic residues. A Phosphoserine; by PKA modification is found at Ser-427.

It belongs to the protein kinase superfamily. CAMK Ser/Thr protein kinase family. LKB1 subfamily. Catalytic component of a trimeric complex composed of STK11/LKB1, STRAD (STRADA or STRADB) and CAB39/MO25 (CAB39/MO25alpha or CAB39L/MO25beta). Mg(2+) serves as cofactor. The cofactor is Mn(2+). Post-translationally, phosphorylated by a cAMP-dependent protein kinase. Autophosphorylated in a reaction that prefers Mn(2+) to Mg(2+). In terms of tissue distribution, oocytes, eggs and early embryos.

Its subcellular location is the nucleus. It is found in the cytoplasm. It carries out the reaction L-seryl-[protein] + ATP = O-phospho-L-seryl-[protein] + ADP + H(+). It catalyses the reaction L-threonyl-[protein] + ATP = O-phospho-L-threonyl-[protein] + ADP + H(+). In terms of biological role, tumor suppressor serine/threonine-protein kinase that controls the activity of AMP-activated protein kinase (AMPK) family members, thereby playing a role in various processes such as cell metabolism, cell polarity, apoptosis and DNA damage response. Acts by phosphorylating the T-loop of AMPK family proteins, leading to promote their activity. This Xenopus laevis (African clawed frog) protein is Serine/threonine-protein kinase stk11.